The sequence spans 356 residues: Cyclin-D1-binding protein 1 (356 aa).

Alanine 2 is modified (N-acetylalanine). 2 interaction with TCF3 regions span residues alanine 2–valine 181 and isoleucine 147–leucine 356. The tract at residues alanine 2–glutamate 187 is interaction with RPLP0. Positions alanine 2–serine 205 are required for interaction with CCND1. The disordered stretch occupies residues tyrosine 198–asparagine 224. Positions leucine 236–leucine 356 are interaction with RPLP0.

This sequence belongs to the CCNDBP1 family. In terms of assembly, interacts with CCND1 and GRAP2. May also interact with COPS5, RPLP0, SIRT6, SYF2 and TCF3. Post-translationally, phosphorylated. Expressed at high levels in brain, intestine, muscle and ovary and at lower levels in heart, kidney, liver, lung, spleen and testis.

It localises to the cytoplasm. The protein resides in the nucleus. May negatively regulate cell cycle progression. May act at least in part via inhibition of the cyclin-D1/CDK4 complex, thereby preventing phosphorylation of RB1 and blocking E2F-dependent transcription. May be required for hepatocyte proliferation. This chain is Cyclin-D1-binding protein 1 (Ccndbp1), found in Mus musculus (Mouse).